The chain runs to 789 residues: UPF0313 protein VC_1711 (789 aa).

In terms of domain architecture, Radical SAM core spans 363 to 642 (AYDMIKTSVN…KALLRYHDPA (280 aa)). Cys-377, Cys-381, and Cys-384 together coordinate [4Fe-4S] cluster. The tract at residues 669–789 (PEKDSDLVTP…NTQRQPQRAR (121 aa)) is disordered. Residues 683-698 (KSGRHGANRFATKHTH) are compositionally biased toward basic residues. 3 stretches are compositionally biased toward polar residues: residues 716–726 (RPNSGNKSNQG), 733–763 (PTGSKPTANKPAGNQSARSEQNRGQQGQRGS), and 778–789 (RGNTQRQPQRAR).

It belongs to the UPF0313 family. It depends on [4Fe-4S] cluster as a cofactor.

The polypeptide is UPF0313 protein VC_1711 (Vibrio cholerae serotype O1 (strain ATCC 39315 / El Tor Inaba N16961)).